Consider the following 192-residue polypeptide: tRNA (pseudouridine(54)-N(1))-methyltransferase (192 aa).

Residues leucine 127 and cysteine 181 each coordinate S-adenosyl-L-methionine.

It belongs to the methyltransferase superfamily. TrmY family. As to quaternary structure, homodimer.

It is found in the cytoplasm. The catalysed reaction is pseudouridine(54) in tRNA + S-adenosyl-L-methionine = N(1)-methylpseudouridine(54) in tRNA + S-adenosyl-L-homocysteine + H(+). Its function is as follows. Specifically catalyzes the N1-methylation of pseudouridine at position 54 (Psi54) in tRNAs. The sequence is that of tRNA (pseudouridine(54)-N(1))-methyltransferase from Methanocella arvoryzae (strain DSM 22066 / NBRC 105507 / MRE50).